A 307-amino-acid polypeptide reads, in one-letter code: Fructose-bisphosphate aldolase (307 aa).

A D-glyceraldehyde 3-phosphate-binding site is contributed by serine 49. The active-site Proton donor is the aspartate 82. 4 residues coordinate Zn(2+): histidine 83, aspartate 104, glutamate 134, and histidine 180. Position 181 (glycine 181) interacts with dihydroxyacetone phosphate. Position 210 (histidine 210) interacts with Zn(2+). Residues glycine 211–serine 213 and asparagine 253–threonine 256 each bind dihydroxyacetone phosphate.

This sequence belongs to the class II fructose-bisphosphate aldolase family. As to quaternary structure, homodimer. It depends on Zn(2+) as a cofactor.

The enzyme catalyses beta-D-fructose 1,6-bisphosphate = D-glyceraldehyde 3-phosphate + dihydroxyacetone phosphate. It participates in carbohydrate degradation; glycolysis; D-glyceraldehyde 3-phosphate and glycerone phosphate from D-glucose: step 4/4. Its function is as follows. Catalyzes the aldol condensation of dihydroxyacetone phosphate (DHAP or glycerone-phosphate) with glyceraldehyde 3-phosphate (G3P) to form fructose 1,6-bisphosphate (FBP) in gluconeogenesis and the reverse reaction in glycolysis. This is Fructose-bisphosphate aldolase (fba) from Helicobacter pylori (strain J99 / ATCC 700824) (Campylobacter pylori J99).